Consider the following 1342-residue polypeptide: DNA-directed RNA polymerase subunit beta (1342 aa).

This sequence belongs to the RNA polymerase beta chain family. As to quaternary structure, the RNAP catalytic core consists of 2 alpha, 1 beta, 1 beta' and 1 omega subunit. When a sigma factor is associated with the core the holoenzyme is formed, which can initiate transcription.

The catalysed reaction is RNA(n) + a ribonucleoside 5'-triphosphate = RNA(n+1) + diphosphate. Functionally, DNA-dependent RNA polymerase catalyzes the transcription of DNA into RNA using the four ribonucleoside triphosphates as substrates. The protein is DNA-directed RNA polymerase subunit beta of Glaesserella parasuis serovar 5 (strain SH0165) (Haemophilus parasuis).